The following is an 82-amino-acid chain: Immediate early response 3-interacting protein 1 (82 aa).

2 helical membrane-spanning segments follow: residues 2-22 (AFTL…VAVL) and 62-82 (VMRV…LLFG).

Belongs to the YOS1 family.

The protein resides in the endoplasmic reticulum membrane. Regulator of endoplasmic reticulum secretion that acts as a key determinant of brain size. Required for secretion of extracellular matrix proteins. Required for correct brain development by depositing sufficient extracellular matrix proteins for tissue integrity and the proliferation of neural progenitors. Acts as a regulator of the unfolded protein response (UPR). The chain is Immediate early response 3-interacting protein 1 from Xenopus laevis (African clawed frog).